A 348-amino-acid polypeptide reads, in one-letter code: D-erythrose-4-phosphate dehydrogenase (348 aa).

NAD(+)-binding positions include 12-13 (RI) and Arg81. Residues 154-156 (SCT), Arg200, 213-214 (TK), and Arg236 contribute to the substrate site. Cys155 (nucleophile) is an active-site residue. Asn318 serves as a coordination point for NAD(+).

The protein belongs to the glyceraldehyde-3-phosphate dehydrogenase family. Epd subfamily. In terms of assembly, homotetramer.

It is found in the cytoplasm. It carries out the reaction D-erythrose 4-phosphate + NAD(+) + H2O = 4-phospho-D-erythronate + NADH + 2 H(+). It functions in the pathway cofactor biosynthesis; pyridoxine 5'-phosphate biosynthesis; pyridoxine 5'-phosphate from D-erythrose 4-phosphate: step 1/5. Functionally, catalyzes the NAD-dependent conversion of D-erythrose 4-phosphate to 4-phosphoerythronate. This is D-erythrose-4-phosphate dehydrogenase from Salmonella agona (strain SL483).